The sequence spans 248 residues: Large ribosomal subunit protein uL30A (248 aa).

The disordered stretch occupies residues 1-44 (MSQKKQKIQVEQKVPENVAKKTQRDSKLRDAVAKRRTERLAANK). Residues 8–41 (IQVEQKVPENVAKKTQRDSKLRDAVAKRRTERLA) show a composition bias toward basic and acidic residues.

It belongs to the universal ribosomal protein uL30 family.

Its function is as follows. Binds to G-rich structures in 28S rRNA and in mRNAs. Plays a regulatory role in the translation apparatus; inhibits cell-free translation of mRNAs. The polypeptide is Large ribosomal subunit protein uL30A (Rpl7-1) (Paramecium tetraurelia).